A 176-amino-acid chain; its full sequence is Mitochondrial inner membrane protein Mpv17 (176 aa).

The next 4 membrane-spanning stretches (helical) occupy residues 18-38 (VQVLTAGSLMGVGDMISQQLV), 53-73 (TMVSLGCGFVGPVVGGWYKVL), 94-114 (GGFAPCFLGCFLPLVGILNGM), and 131-151 (LITNYYLWPAVQLANFYLVPL).

This sequence belongs to the peroxisomal membrane protein PXMP2/4 family. In terms of tissue distribution, high levels in heart, kidney, and brain, intermediate levels in testis, and low levels in liver and spleen.

It localises to the mitochondrion inner membrane. Non-selective channel that modulates the membrane potential under normal conditions and oxidative stress, and is involved in mitochondrial homeostasis. Involved in mitochondrial deoxynucleoside triphosphates (dNTP) pool homeostasis and mitochondrial DNA (mtDNA) maintenance. May be involved in the regulation of reactive oxygen species metabolism and the control of oxidative phosphorylation. The polypeptide is Mitochondrial inner membrane protein Mpv17 (Mus musculus (Mouse)).